Consider the following 37-residue polypeptide: Cytochrome b6-f complex subunit 5 (37 aa).

A helical transmembrane segment spans residues 5–25 (FLFGIVLGLIPITLAGLFVTA).

Belongs to the PetG family. As to quaternary structure, the 4 large subunits of the cytochrome b6-f complex are cytochrome b6, subunit IV (17 kDa polypeptide, PetD), cytochrome f and the Rieske protein, while the 4 small subunits are PetG, PetL, PetM and PetN. The complex functions as a dimer.

The protein resides in the plastid. The protein localises to the chloroplast thylakoid membrane. In terms of biological role, component of the cytochrome b6-f complex, which mediates electron transfer between photosystem II (PSII) and photosystem I (PSI), cyclic electron flow around PSI, and state transitions. PetG is required for either the stability or assembly of the cytochrome b6-f complex. This Solanum lycopersicum (Tomato) protein is Cytochrome b6-f complex subunit 5.